The sequence spans 370 residues: Arginine kinase (370 aa).

The Phosphagen kinase N-terminal domain occupies 6–89 (QKKYPAKDDF…FDPVIEEYHN (84 aa)). The region spanning 115-358 (YVISSRVRTG…KVLIEMEKKL (244 aa)) is the Phosphagen kinase C-terminal domain. Residues 118-122 (SSRVR) and His181 contribute to the ATP site. Glu222 is a binding site for substrate. Arg226 provides a ligand contact to ATP. Cys274 lines the substrate pocket. Residues 283–287 (RCSVH) and 311–316 (RGTSGE) contribute to the ATP site. A substrate-binding site is contributed by Glu316.

The protein belongs to the ATP:guanido phosphotransferase family. Homodimer. Post-translationally, the N-terminus is blocked.

The catalysed reaction is L-arginine + ATP = N(omega)-phospho-L-arginine + ADP + H(+). This chain is Arginine kinase (AK), found in Stichopus japonicus (Sea cucumber).